Here is a 469-residue protein sequence, read N- to C-terminus: Tubulin gamma-2 chain (469 aa).

Alanine 142–glycine 148 serves as a coordination point for GTP.

Belongs to the tubulin family.

It localises to the cytoplasm. It is found in the cytoskeleton. Its subcellular location is the microtubule organizing center. Functionally, tubulin is the major constituent of microtubules. The gamma chain is found at microtubule organizing centers (MTOC) such as the spindle poles, suggesting that it is involved in the minus-end nucleation of microtubule assembly. In Oryza sativa subsp. japonica (Rice), this protein is Tubulin gamma-2 chain (TUBG2).